The sequence spans 208 residues: Probable adenylyl-sulfate kinase (208 aa).

Residue 38–45 (GLSGSGKS) coordinates ATP. Residue Ser-112 is the Phosphoserine intermediate of the active site.

This sequence belongs to the APS kinase family.

It catalyses the reaction adenosine 5'-phosphosulfate + ATP = 3'-phosphoadenylyl sulfate + ADP + H(+). It functions in the pathway sulfur metabolism; hydrogen sulfide biosynthesis; sulfite from sulfate: step 2/3. In terms of biological role, catalyzes the synthesis of activated sulfate. In Halalkalibacterium halodurans (strain ATCC BAA-125 / DSM 18197 / FERM 7344 / JCM 9153 / C-125) (Bacillus halodurans), this protein is Probable adenylyl-sulfate kinase.